The primary structure comprises 502 residues: Zinc finger protein 488 (502 aa).

In terms of domain architecture, SET spans 8–130 (RSLWTNDSKI…EGEELLVWYD (123 aa)). Tyr129 provides a ligand contact to S-adenosyl-L-methionine. The C2H2-type 1; atypical zinc finger occupies 151-174 (YTCTRCGQAFKNENPFLAHCRFLC). 2 disordered regions span residues 267 to 303 (SEPT…KSSR) and 338 to 361 (PSKR…LDSF). Over residues 269 to 286 (PTDNAQTNESKISKNSAF) the composition is skewed to polar residues. 2 C2H2-type zinc fingers span residues 438–460 (NWCA…MRSH) and 479–501 (LTCP…MTSH).

It belongs to the krueppel C2H2-type zinc-finger protein family. As to expression, expressed in pMN progenitors and oligodendrocyte lineage cells in the embryo with expression declining in oligodendrocytes undergoing differentiation.

Its subcellular location is the nucleus. Transcriptional repressor. May have histone methyltransferase activity. Negatively regulates shh signaling activity in pMN progenitor cells which prevents their switch from motor neuron to oligodendrocyte precursor cell production. Independently of shh activity, also regulates oligodendrocyte formation. The protein is Zinc finger protein 488 of Danio rerio (Zebrafish).